Consider the following 273-residue polypeptide: Manganese catalase (273 aa).

Glu35 is a binding site for Mn(2+). Residues Asp57 and Asp61 each coordinate Ca(2+). Residues Glu66, His69, Glu149, and His182 each coordinate Mn(2+). Positions 220, 222, and 224 each coordinate Ca(2+). A disordered region spans residues 254–273; that stretch reads EKPELKPAPPFVHNTLPGRE.

The protein belongs to the manganese catalase family. The cofactor is Ca(2+). Mn(2+) serves as cofactor.

The catalysed reaction is 2 H2O2 = O2 + 2 H2O. Functionally, catalyzes the decomposition of hydrogen peroxide into water and oxygen. The chain is Manganese catalase (ydbD) from Bacillus subtilis (strain 168).